A 270-amino-acid polypeptide reads, in one-letter code: Myeloid leukemia factor 1 (270 aa).

A phosphoserine mark is found at serine 6, serine 8, serine 32, and serine 34. Residues 50–125 form an interaction with COPS3 region; sequence RARNRMGHED…VGDEPPKVFQ (76 aa). Disordered regions lie at residues 127–148 and 221–247; these read STQT…RDSD and RSVA…AIEH. Positions 138-148 are enriched in basic and acidic residues; sequence KETRKALRDSD.

It belongs to the MLF family. In terms of assembly, interacts with CENPU. Also interacts with NRBP1/MADM, YWHAZ/14-3-3-zeta and HNRPUL2/MANP. NRBP1 recruits a serine kinase which phosphorylates both itself and MLF1. Phosphorylated MLF1 then binds to YWHAZ and is retained in the cytoplasm. Retained in the nucleus by binding to HNRPUL2. Binds to COPS3/CSN3 which is required for suppression of COP1 and activation of p53. Phosphorylation is required for binding to YWHAZ.

The protein resides in the cytoplasm. The protein localises to the nucleus. Its subcellular location is the cell projection. It localises to the cilium. It is found in the cytoskeleton. The protein resides in the cilium basal body. In terms of biological role, involved in lineage commitment of primary hemopoietic progenitors by restricting erythroid formation and enhancing myeloid formation. Interferes with erythropoietin-induced erythroid terminal differentiation by preventing cells from exiting the cell cycle through suppression of CDKN1B/p27Kip1 levels. Suppresses COP1 activity via CSN3 which activates p53 and induces cell cycle arrest. Binds DNA and affects the expression of a number of genes so may function as a transcription factor in the nucleus. This is Myeloid leukemia factor 1 (MLF1) from Bos taurus (Bovine).